Consider the following 412-residue polypeptide: COP9 signalosome complex subunit 4 (412 aa).

The region spanning 216-378 (EAAQRYYELS…GILHFEDSNP (163 aa)) is the PCI domain.

The protein belongs to the CSN4 family. In terms of assembly, component of the CSN complex, probably composed of csn-1, csn-2, csn-3, csn-4, csn-5, csn-6 and csn-7. Within the complex it probably interacts directly with csn-2 and csn-4. In the complex, it probably interacts directly with csn-1, csn-2, csn-3 and csn-6. Interacts with itself.

The protein resides in the cytoplasm. The protein localises to the nucleus. Functionally, component of the COP9 signalosome complex (CSN), a complex involved in various cellular and developmental processes. The CSN complex is an essential regulator of the ubiquitin (Ubl) conjugation pathway by mediating the deneddylation of the cullin subunits of the SCF-type E3 ligase complexes, leading to decrease the Ubl ligase activity of SCF. The CSN complex plays an essential role in embryogenesis and oogenesis and is required to regulate microtubule stability in the early embryo. Mediates mei-3/katanin targeting for degradation at the meiosis to mitosis transition via deneddylation of cul-3. The chain is COP9 signalosome complex subunit 4 (csn-4) from Caenorhabditis elegans.